Reading from the N-terminus, the 861-residue chain is Cone cGMP-specific 3',5'-cyclic phosphodiesterase subunit alpha' (861 aa).

GAF domains follow at residues 75 to 224 and 256 to 433; these read SAEQ…AVAL and DVER…GWSL. 3',5'-cyclic GMP is bound by residues Ser97, Asn116, 169 to 172, and Thr176; that span reads DKQT. One can recognise a PDEase domain in the interval 486-819; sequence EERQLLAILK…VEWKSLAEEY (334 aa). His562 (proton donor) is an active-site residue. Residues His566, His602, Asp603, and Asp723 each coordinate a divalent metal cation. Positions 826–839 are enriched in basic and acidic residues; sequence TEEEAGKQEEEASD. The disordered stretch occupies residues 826-861; the sequence is TEEEAGKQEEEASDGKAATDLGGSAEDKKSKTCLML. Cys858 bears the Cysteine methyl ester mark. A lipid anchor (S-geranylgeranyl cysteine) is attached at Cys858. Positions 859–861 are cleaved as a propeptide — removed in mature form; sequence LML.

The protein belongs to the cyclic nucleotide phosphodiesterase family. As to quaternary structure, composed of two alpha' subunits that are associated with 3 smaller proteins of 11, 13, and 15 kDa. It depends on a divalent metal cation as a cofactor.

The protein resides in the cell membrane. It catalyses the reaction 3',5'-cyclic GMP + H2O = GMP + H(+). As cone-specific cGMP phosphodiesterase, it plays an essential role in light detection and cone phototransduction by rapidly decreasing intracellular levels of cGMP. This Mus musculus (Mouse) protein is Cone cGMP-specific 3',5'-cyclic phosphodiesterase subunit alpha' (Pde6c).